We begin with the raw amino-acid sequence, 213 residues long: A-type ATP synthase subunit D (213 aa).

This sequence belongs to the V-ATPase D subunit family. Has multiple subunits with at least A(3), B(3), C, D, E, F, H, I and proteolipid K(x).

Its subcellular location is the cell membrane. Functionally, component of the A-type ATP synthase that produces ATP from ADP in the presence of a proton gradient across the membrane. The polypeptide is A-type ATP synthase subunit D (Thermoplasma acidophilum (strain ATCC 25905 / DSM 1728 / JCM 9062 / NBRC 15155 / AMRC-C165)).